The sequence spans 109 residues: U4-lycotoxin-Ls1a (109 aa).

A signal peptide spans 1-22 (MKVLVLFSVLFLTLFSYSSTEA). A propeptide spanning residues 23-44 (IDELDSDAEEDMLSLMANEQVR) is cleaved from the precursor. The segment at 45–88 (AKACTPRLHDCSHDRHSCCRGELFKDVCYCFYPEGEDKTEVCSC) is knottin domain. Intrachain disulfides connect cysteine 48/cysteine 63, cysteine 55/cysteine 72, cysteine 62/cysteine 88, and cysteine 74/cysteine 86. Positions 89–108 (QQPKSHKYIEKVVDKAKTVV) are linear cationic cytotoxin domain.

Belongs to the neurotoxin 19 (CSTX) family. 05 (U4-Lctx) subfamily. Expressed by the venom gland.

The protein resides in the secreted. Functionally, enhances the high-affinity desensitization of human P2RX3 purinoceptors. The sequence is that of U4-lycotoxin-Ls1a from Lycosa singoriensis (Wolf spider).